Consider the following 281-residue polypeptide: Bis(5'-nucleosyl)-tetraphosphatase, symmetrical (281 aa).

This sequence belongs to the Ap4A hydrolase family.

The catalysed reaction is P(1),P(4)-bis(5'-adenosyl) tetraphosphate + H2O = 2 ADP + 2 H(+). Its function is as follows. Hydrolyzes diadenosine 5',5'''-P1,P4-tetraphosphate to yield ADP. This Acidovorax sp. (strain JS42) protein is Bis(5'-nucleosyl)-tetraphosphatase, symmetrical.